A 262-amino-acid polypeptide reads, in one-letter code: uncharacterized protein (262 aa).

6 helical membrane-spanning segments follow: residues 21-41 (ILITYFLCWAGFLFSFSVGKF), 94-114 (IVSNFMGCLIIMFALGALAYL), 139-159 (LLILFIFTVINPLTGLIGVNL), 164-184 (LIAVLPHGFFEFFGFATAVVV), 205-225 (IVILIACSFIFIFIAGMLEPI), and 240-260 (LLAAFATGYKNLFLYLISMLF).

The protein localises to the cell membrane. This is an uncharacterized protein from Methanocaldococcus jannaschii (strain ATCC 43067 / DSM 2661 / JAL-1 / JCM 10045 / NBRC 100440) (Methanococcus jannaschii).